Consider the following 258-residue polypeptide: UPF0246 protein YaaA (258 aa).

The protein belongs to the UPF0246 family.

In Escherichia coli O17:K52:H18 (strain UMN026 / ExPEC), this protein is UPF0246 protein YaaA.